The following is a 556-amino-acid chain: (6-4)DNA photolyase (556 aa).

Residues 24–162 (SGSLIWFRKG…EVFSPVSHTL (139 aa)) enclose the Photolyase/cryptochrome alpha/beta domain. Position 262 (glutamate 262) interacts with phosphate. FAD is bound by residues lysine 263, 276 to 280 (TTVMS), 317 to 321 (QLLWR), 380 to 383 (WMHH), arginine 386, 415 to 417 (DSD), and asparagine 421. A DNA-binding site is contributed by tryptophan 320. An interaction with DNA region spans residues 382 to 387 (HHLARH). Residue tryptophan 427 coordinates DNA. The tract at residues 534–556 (LRRKLQKDEHEESKIRNQRPKLK) is disordered. A compositionally biased stretch (basic and acidic residues) spans 539–548 (QKDEHEESKI).

This sequence belongs to the DNA photolyase class-1 family. FAD serves as cofactor. In terms of tissue distribution, expressed in siliques, flowers and leaves. Not detected in roots.

It catalyses the reaction (6-4) photoproduct (in DNA) = 2 pyrimidine residues (in DNA).. Functionally, involved in repair of UV radiation-induced DNA damage. Catalyzes the photoreactivation of pyrimidine [6-4] pyrimidone photoproduct (6-4 products). Binds specifically to DNA containing 6-4 products and repairs these lesions in a visible light-dependent manner. Not required for repair of cyclobutane pyrimidine dimer (CPD). This chain is (6-4)DNA photolyase (UVR3), found in Arabidopsis thaliana (Mouse-ear cress).